The sequence spans 242 residues: Ras-like protein family member 11A (242 aa).

Residues 17–241 (ESSSDYLLPK…SSKAKASSAL (225 aa)) are small GTPase-like. GTP-binding positions include 34–41 (GAGCVGKS), 81–88 (DTPGGIQA), and 147–150 (NKGD).

It belongs to the small GTPase superfamily. Ras family. In terms of assembly, interacts with UBF/UBTF.

It is found in the nucleus. The protein localises to the nucleolus. It catalyses the reaction GTP + H2O = GDP + phosphate + H(+). Regulator of rDNA transcription. Acts in cooperation UBF/UBTF and positively regulates RNA polymerase I transcription. This chain is Ras-like protein family member 11A, found in Mus musculus (Mouse).